A 113-amino-acid polypeptide reads, in one-letter code: Large ribosomal subunit protein bL17 (113 aa).

The protein belongs to the bacterial ribosomal protein bL17 family. Part of the 50S ribosomal subunit. Contacts protein L32.

The polypeptide is Large ribosomal subunit protein bL17 (Clostridium kluyveri (strain NBRC 12016)).